Consider the following 471-residue polypeptide: Trigger factor (471 aa).

The 80-residue stretch at 166–245 folds into the PPIase FKBP-type domain; it reads DDFITIDINA…LTAVKVRELP (80 aa). Positions 442–471 are disordered; that stretch reads AAGVTGEDDDTEAEEERVTVSADDPGAARF. Positions 447–456 are enriched in acidic residues; sequence GEDDDTEAEE.

It belongs to the FKBP-type PPIase family. Tig subfamily.

It localises to the cytoplasm. It carries out the reaction [protein]-peptidylproline (omega=180) = [protein]-peptidylproline (omega=0). In terms of biological role, involved in protein export. Acts as a chaperone by maintaining the newly synthesized protein in an open conformation. Functions as a peptidyl-prolyl cis-trans isomerase. The chain is Trigger factor from Renibacterium salmoninarum (strain ATCC 33209 / DSM 20767 / JCM 11484 / NBRC 15589 / NCIMB 2235).